The primary structure comprises 721 residues: Procollagen-lysine,2-oxoglutarate 5-dioxygenase (721 aa).

The N-terminal stretch at 1–21 (MRIQQSALLLLLLAVTSQGDA) is a signal peptide. Residues Asn504, Asn530, and Asn536 are each glycosylated (N-linked (GlcNAc...) asparagine). One can recognise a Fe2OG dioxygenase domain in the interval 627–721 (NPPRALMNFM…RYIMISFIDP (95 aa)). Fe cation is bound by residues His650 and Asp652. Residue Asn680 is glycosylated (N-linked (GlcNAc...) asparagine). His702 lines the Fe cation pocket. Asn709 is a glycosylation site (N-linked (GlcNAc...) asparagine). Residue Arg712 coordinates 2-oxoglutarate.

The cofactor is L-ascorbate. Fe(2+) serves as cofactor.

It is found in the endoplasmic reticulum. It localises to the secreted. The protein localises to the extracellular space. The catalysed reaction is L-lysyl-[collagen] + 2-oxoglutarate + O2 = (5R)-5-hydroxy-L-lysyl-[collagen] + succinate + CO2. Functionally, forms hydroxylysine residues in collagen type IV. Required for the secretion of collagen type IV (vkg) from haemocytes, fat body and follicle cells. In Drosophila melanogaster (Fruit fly), this protein is Procollagen-lysine,2-oxoglutarate 5-dioxygenase.